A 201-amino-acid polypeptide reads, in one-letter code: Peptidyl-prolyl cis-trans isomerase FKBP11 (201 aa).

The first 27 residues, 1 to 27 (MTLRPSLLPLHLLLLLLLSAAVCRAEA), serve as a signal peptide directing secretion. The PPIase FKBP-type domain occupies 57-144 (GDTLHIHYTG…QYDVELIALI (88 aa)). Residues 156-176 (ILPLVGMAMVPALLGLIGYHL) form a helical membrane-spanning segment.

It belongs to the FKBP-type PPIase family. Interacts with IFITM5.

It localises to the membrane. The enzyme catalyses [protein]-peptidylproline (omega=180) = [protein]-peptidylproline (omega=0). PPIases accelerate the folding of proteins during protein synthesis. The sequence is that of Peptidyl-prolyl cis-trans isomerase FKBP11 (FKBP11) from Homo sapiens (Human).